Consider the following 227-residue polypeptide: Guanylate kinase (227 aa).

Residues 21–199 (GNLFMVVAPS…ALAELECIVA (179 aa)) form the Guanylate kinase-like domain. 28–35 (APSGAGKS) lines the ATP pocket.

The protein belongs to the guanylate kinase family.

Its subcellular location is the cytoplasm. The catalysed reaction is GMP + ATP = GDP + ADP. Its function is as follows. Essential for recycling GMP and indirectly, cGMP. The polypeptide is Guanylate kinase (Burkholderia lata (strain ATCC 17760 / DSM 23089 / LMG 22485 / NCIMB 9086 / R18194 / 383)).